The sequence spans 237 residues: Phosphoribosylaminoimidazole-succinocarboxamide synthase (237 aa).

Belongs to the SAICAR synthetase family.

The enzyme catalyses 5-amino-1-(5-phospho-D-ribosyl)imidazole-4-carboxylate + L-aspartate + ATP = (2S)-2-[5-amino-1-(5-phospho-beta-D-ribosyl)imidazole-4-carboxamido]succinate + ADP + phosphate + 2 H(+). Its pathway is purine metabolism; IMP biosynthesis via de novo pathway; 5-amino-1-(5-phospho-D-ribosyl)imidazole-4-carboxamide from 5-amino-1-(5-phospho-D-ribosyl)imidazole-4-carboxylate: step 1/2. This is Phosphoribosylaminoimidazole-succinocarboxamide synthase from Psychrobacter arcticus (strain DSM 17307 / VKM B-2377 / 273-4).